A 486-amino-acid chain; its full sequence is UDP-N-acetylmuramoyl-L-alanyl-D-glutamate--2,6-diaminopimelate ligase (486 aa).

S26 contributes to the UDP-N-acetyl-alpha-D-muramoyl-L-alanyl-D-glutamate binding site. An ATP-binding site is contributed by G104–S110. Residues T152–T153, S179, Q185, and R187 contribute to the UDP-N-acetyl-alpha-D-muramoyl-L-alanyl-D-glutamate site. N6-carboxylysine is present on K219. Meso-2,6-diaminopimelate contacts are provided by residues R383, D407–R410, G455, and E459. Residues D407–R410 carry the Meso-diaminopimelate recognition motif motif.

This sequence belongs to the MurCDEF family. MurE subfamily. Mg(2+) serves as cofactor. In terms of processing, carboxylation is probably crucial for Mg(2+) binding and, consequently, for the gamma-phosphate positioning of ATP.

It localises to the cytoplasm. It catalyses the reaction UDP-N-acetyl-alpha-D-muramoyl-L-alanyl-D-glutamate + meso-2,6-diaminopimelate + ATP = UDP-N-acetyl-alpha-D-muramoyl-L-alanyl-gamma-D-glutamyl-meso-2,6-diaminopimelate + ADP + phosphate + H(+). It participates in cell wall biogenesis; peptidoglycan biosynthesis. Functionally, catalyzes the addition of meso-diaminopimelic acid to the nucleotide precursor UDP-N-acetylmuramoyl-L-alanyl-D-glutamate (UMAG) in the biosynthesis of bacterial cell-wall peptidoglycan. The sequence is that of UDP-N-acetylmuramoyl-L-alanyl-D-glutamate--2,6-diaminopimelate ligase from Caulobacter vibrioides (strain ATCC 19089 / CIP 103742 / CB 15) (Caulobacter crescentus).